We begin with the raw amino-acid sequence, 239 residues long: Probable transcriptional regulatory protein Tcr_1104 (239 aa).

The protein belongs to the TACO1 family.

It localises to the cytoplasm. This chain is Probable transcriptional regulatory protein Tcr_1104, found in Hydrogenovibrio crunogenus (strain DSM 25203 / XCL-2) (Thiomicrospira crunogena).